A 326-amino-acid polypeptide reads, in one-letter code: Adenosine receptor A1 (326 aa).

Residues 1-10 (MPHSVSAFQA) lie on the Extracellular side of the membrane. Residues 11 to 33 (AYIGIEVLIALVSVPGNVLVIWA) form a helical membrane-spanning segment. The Cytoplasmic segment spans residues 34-46 (VKVNQALRDATFC). A helical membrane pass occupies residues 47–69 (FIASLAVADVAVGALVIPLAILI). Over 70–80 (NIGPQTYFHTC) the chain is Extracellular. The cysteines at positions 80 and 169 are disulfide-linked. A helical membrane pass occupies residues 81 to 102 (LMVACPVLILTQSSILALLAIA). Residues 103–123 (VDRYLRVKIPLRYKTVVTPRR) lie on the Cytoplasmic side of the membrane. The chain crosses the membrane as a helical span at residues 124 to 146 (AAVAIAGCWILSLVVGLTPMFGW). Residues 147–176 (NNLSKIEMAWAANGSVGEPVIKCEFEKVIS) lie on the Extracellular side of the membrane. The N-linked (GlcNAc...) asparagine glycan is linked to asparagine 159. A helical transmembrane segment spans residues 177 to 201 (MEYMVYFNFFVWVLPPLLLMVLIYL). The Cytoplasmic segment spans residues 202–235 (EVFYLIRKQLSKKVSASSGDPQKYYGKELKIAKS). Residues 236–259 (LALILFLFALSWLPLHILNCITLF) traverse the membrane as a helical segment. Residues 260-267 (CPTCHKPT) lie on the Extracellular side of the membrane. A helical transmembrane segment spans residues 268–292 (ILTYIAIFLTHGNSAMNPIVYAFRI). The Cytoplasmic segment spans residues 293 to 326 (QKFRVTFLKIWNDHFRCQPEPPIDEDLPEEKVDD). Cysteine 309 carries S-palmitoyl cysteine lipidation.

The protein belongs to the G-protein coupled receptor 1 family.

The protein localises to the cell membrane. Receptor for adenosine. The activity of this receptor is mediated by G proteins which inhibit adenylyl cyclase. This Cavia porcellus (Guinea pig) protein is Adenosine receptor A1 (ADORA1).